The sequence spans 827 residues: Lon protease (827 aa).

The disordered stretch occupies residues Met1–Glu27. The region spanning Leu32 to Phe225 is the Lon N-terminal domain. Gly385 to Thr392 serves as a coordination point for ATP. One can recognise a Lon proteolytic domain in the interval Ile625–Pro806. Active-site residues include Ser712 and Lys755.

This sequence belongs to the peptidase S16 family. In terms of assembly, homohexamer. Organized in a ring with a central cavity.

Its subcellular location is the cytoplasm. The catalysed reaction is Hydrolysis of proteins in presence of ATP.. ATP-dependent serine protease that mediates the selective degradation of mutant and abnormal proteins as well as certain short-lived regulatory proteins. Required for cellular homeostasis and for survival from DNA damage and developmental changes induced by stress. Degrades polypeptides processively to yield small peptide fragments that are 5 to 10 amino acids long. Binds to DNA in a double-stranded, site-specific manner. In Chloroflexus aurantiacus (strain ATCC 29366 / DSM 635 / J-10-fl), this protein is Lon protease.